Consider the following 394-residue polypeptide: Proliferation-associated protein 2G4 (394 aa).

At Ser2 the chain carries N-acetylserine. Ser2 carries the post-translational modification Phosphoserine. Positions 2–48 (SGEDEQQEQTIAEDLVVTKYKMGGDIANRVLRSLVEASSSGVSVLSL) are necessary for nucleolar localization. The RNA-binding stretch occupies residues 46–54 (LSLCEKGDA). Lys298 is covalently cross-linked (Glycyl lysine isopeptide (Lys-Gly) (interchain with G-Cter in SUMO2)). The segment at 301 to 394 (LLQPFNVLYE…ETLEENGAGD (94 aa)) is necessary for nucleolar localization. Ser335 carries the post-translational modification Phosphoserine. Residues 358–394 (LQSSASRKTQKKKKKKASKTVENATSGETLEENGAGD) form a disordered region. Phosphoserine; by PKC/PRKCD is present on Ser361. Residues 361–375 (SASRKTQKKKKKKAS) are interaction with RNA. Positions 365-375 (KTQKKKKKKAS) are enriched in basic residues. Phosphothreonine is present on residues Thr366 and Thr386.

The protein belongs to the peptidase M24 family. Isoform 2 interacts with the cytoplasmic domain of non-phosphorylated ERBB3; the interaction requires PKC activity. Interacts with AR. Treatment with HRG leads to dissociation from ERBB3 and increases association with AR. Interacts with nucleolin/NCL. Component of a ribonucleoprotein complex containing at least PA2G4, NCL, TOP1, PABPC2, RPLP0, acetylated histone H1 (HIST1H1A or H1F1), histone H1 2/4, RPL4, RPL8, RPL15, RPL18, RPL18A, RPL21, RPL11, RPL12, RPL28, RPL27, RPLP2 and RPL24. Interacts with HDAC2. Interacts with RB1; the interaction is enhanced upon PA2G4 dephosphorylation. Interacts with AKT1. Isoform 1 and isoform 2 interact with RNF20. Isoform 2 interacts with HUWE1. Interacts with DNAJC21. Phosphorylated on serine and threonine residues. Phosphorylation is enhanced by HRG treatment. Basal phosphorylation is PKC-dependent and HRG-induced phosphorylation is predominantly PKC-independent. Phosphorylation at Ser-361 by PKC/PRKCD regulates its nucleolar localization. Post-translationally, isoform 2 is polyubiquitinated, leading to proteasomal degradation and phosphorylation by PKC/PRKCD enhances polyubiquitination. In terms of tissue distribution, widely expressed.

Its subcellular location is the cytoplasm. The protein localises to the nucleus. It localises to the nucleolus. May play a role in a ERBB3-regulated signal transduction pathway. Seems be involved in growth regulation. Acts a corepressor of the androgen receptor (AR) and is regulated by the ERBB3 ligand neuregulin-1/heregulin (HRG). Inhibits transcription of some E2F1-regulated promoters, probably by recruiting histone acetylase (HAT) activity. Binds RNA. Associates with 28S, 18S and 5.8S mature rRNAs, several rRNA precursors and probably U3 small nucleolar RNA. May be involved in regulation of intermediate and late steps of rRNA processing. May be involved in ribosome assembly. Mediates cap-independent translation of specific viral IRESs (internal ribosomal entry site). Together with PTBP1 is required for the translation initiation on the foot-and-mouth disease virus (FMDV) IRES. Regulates cell proliferation, differentiation, and survival. Isoform 1 suppresses apoptosis whereas isoform 2 promotes cell differentiation. The protein is Proliferation-associated protein 2G4 (Pa2g4) of Mus musculus (Mouse).